Consider the following 190-residue polypeptide: Hypoxanthine/guanine phosphoribosyltransferase (190 aa).

This sequence belongs to the purine/pyrimidine phosphoribosyltransferase family. Archaeal HPRT subfamily. Homodimer.

The protein resides in the cytoplasm. The catalysed reaction is IMP + diphosphate = hypoxanthine + 5-phospho-alpha-D-ribose 1-diphosphate. It carries out the reaction GMP + diphosphate = guanine + 5-phospho-alpha-D-ribose 1-diphosphate. The protein operates within purine metabolism; IMP biosynthesis via salvage pathway; IMP from hypoxanthine: step 1/1. Functionally, catalyzes a salvage reaction resulting in the formation of IMP that is energically less costly than de novo synthesis. The chain is Hypoxanthine/guanine phosphoribosyltransferase from Methanosarcina barkeri (strain Fusaro / DSM 804).